A 295-amino-acid polypeptide reads, in one-letter code: Manganese transport system membrane protein MntD (295 aa).

9 consecutive transmembrane segments (helical) span residues 7 to 27 (IIAT…FLVL), 42 to 62 (LLGI…YMFI), 63 to 83 (GAAA…SKGV), 87 to 107 (AAIG…LSVY), 138 to 158 (IGPK…VLIS), 174 to 194 (ALAL…MLSL), 203 to 223 (VGAV…HLLT), 227 to 247 (LYML…GYFF), and 253 to 273 (VSIS…AFLF).

This sequence belongs to the ABC-3 integral membrane protein family. The complex is probably composed of two ATP-binding proteins (MntB), two transmembrane proteins (MntC and MntD) and a solute-binding protein (MntA).

It is found in the cell membrane. Probably part of the ABC transporter complex MntABCD involved in manganese import. Probably responsible for the translocation of the substrate across the membrane. The polypeptide is Manganese transport system membrane protein MntD (Bacillus subtilis (strain 168)).